The primary structure comprises 309 residues: HPr kinase/phosphorylase (309 aa).

Active-site residues include H138 and K159. 153 to 160 (GQSGVGKS) contributes to the ATP binding site. Mg(2+) is bound at residue S160. D177 acts as the Proton acceptor; for phosphorylation activity. Proton donor; for dephosphorylation activity in catalysis. An important for the catalytic mechanism of both phosphorylation and dephosphorylation region spans residues 201 to 210 (LEIRGLGIIN). E202 serves as a coordination point for Mg(2+). Residue R243 is part of the active site. Residues 264–269 (PVRPGR) are important for the catalytic mechanism of dephosphorylation.

Belongs to the HPrK/P family. Homohexamer. Mg(2+) serves as cofactor.

The catalysed reaction is [HPr protein]-L-serine + ATP = [HPr protein]-O-phospho-L-serine + ADP + H(+). The enzyme catalyses [HPr protein]-O-phospho-L-serine + phosphate + H(+) = [HPr protein]-L-serine + diphosphate. Functionally, catalyzes the ATP- as well as the pyrophosphate-dependent phosphorylation of a specific serine residue in HPr, a phosphocarrier protein of the phosphoenolpyruvate-dependent sugar phosphotransferase system (PTS). HprK/P also catalyzes the pyrophosphate-producing, inorganic phosphate-dependent dephosphorylation (phosphorolysis) of seryl-phosphorylated HPr (P-Ser-HPr). The two antagonistic activities of HprK/P are regulated by several intracellular metabolites, which change their concentration in response to the absence or presence of rapidly metabolisable carbon sources (glucose, fructose, etc.) in the growth medium. Also phosphorylates/dephosphorylates the HPr-like catabolite repression protein crh on a specific serine residue. Therefore, by controlling the phosphorylation state of HPr and crh, HPrK/P is a sensor enzyme that plays a major role in the regulation of carbon metabolism and sugar transport: it mediates carbon catabolite repression (CCR), and regulates PTS-catalyzed carbohydrate uptake and inducer exclusion. The polypeptide is HPr kinase/phosphorylase (Bacillus cytotoxicus (strain DSM 22905 / CIP 110041 / 391-98 / NVH 391-98)).